Reading from the N-terminus, the 943-residue chain is Isoleucine--tRNA ligase (943 aa).

The 'HIGH' region signature appears at 58-68 (PYANGSIHIGH). Glu-567 lines the L-isoleucyl-5'-AMP pocket. The short motif at 608–612 (KMSKS) is the 'KMSKS' region element. Lys-611 contacts ATP. Positions 906, 909, 926, and 929 each coordinate Zn(2+).

Belongs to the class-I aminoacyl-tRNA synthetase family. IleS type 1 subfamily. As to quaternary structure, monomer. The cofactor is Zn(2+).

The protein resides in the cytoplasm. The enzyme catalyses tRNA(Ile) + L-isoleucine + ATP = L-isoleucyl-tRNA(Ile) + AMP + diphosphate. Functionally, catalyzes the attachment of isoleucine to tRNA(Ile). As IleRS can inadvertently accommodate and process structurally similar amino acids such as valine, to avoid such errors it has two additional distinct tRNA(Ile)-dependent editing activities. One activity is designated as 'pretransfer' editing and involves the hydrolysis of activated Val-AMP. The other activity is designated 'posttransfer' editing and involves deacylation of mischarged Val-tRNA(Ile). The sequence is that of Isoleucine--tRNA ligase from Ectopseudomonas mendocina (strain ymp) (Pseudomonas mendocina).